Consider the following 189-residue polypeptide: Protein Rex (189 aa).

The segment covering 1–16 (MPKTRRRPRRSQRKRP) has biased composition (basic residues). The interval 1–28 (MPKTRRRPRRSQRKRPPTPWPTSQGLDR) is disordered. The short motif at 2 to 18 (PKTRRRPRRSQRKRPPT) is the Nuclear localization signal, and RNA-binding (RxRE) element. Positions 56–70 (RPVYIVTPYWPPVQS) are homomultimerization. Serine 70 is subject to Phosphoserine; by host. The Nuclear export signal signature appears at 82–93 (LSAQLYSSLSLD). The segment covering 84-94 (AQLYSSLSLDS) has biased composition (low complexity). The disordered stretch occupies residues 84–189 (AQLYSSLSLD…PPSPGPSCPT (106 aa)). Positions 111–125 (RRPPIQPPTFHPPSS) are enriched in pro residues. The tract at residues 123–131 (PSSRPCANT) is homomultimerization. Residues 127-164 (PCANTPPSETDTWNPPLGSTSQPCLFQTPASGPKTCTP) show a composition bias toward polar residues. At threonine 174 the chain carries Phosphothreonine; by host. At serine 177 the chain carries Phosphoserine; by host. The span at 178–189 (FPPPSPGPSCPT) shows a compositional bias: pro residues.

The protein belongs to the deltaretrovirus Rex protein family. As to quaternary structure, homomultimer. Multimeric assembly is essential for activity and involves XPO1. Binds to human XPO1 and KPNB1. Interacts (via N-terminal nuclear localization signal) with human NPM1. In terms of processing, phosphorylated.

The protein localises to the host nucleus. Its subcellular location is the host nucleolus. It is found in the host cytoplasm. In terms of biological role, rex escorts unspliced gag-pro-pol and singly spliced env mRNAs out of the nucleus of infected cells. These mRNAs carry a recognition sequence called Rex responsive element (RxRE or XRE) located at the 3' region of the long terminal repeat (LTR). This function is essential since most HTLV proteins are translated from unspliced or partially spliced pre-mRNAs that cannot exit the nucleus by the pathway used by fully processed cellular mRNAs. Rex itself is translated from a fully spliced mRNA that probably readily exits the nucleus. Rex's nuclear localization signal (NLS) binds directly to KPNB1/importin beta-1 without previous binding to KPNA1/importin alpha-1. KPNB1 binds to the GDP bound form of RAN (Ran-GDP) and targets Rex to the nucleus. In the nucleus, the conversion from Ran-GDP to Ran-GTP dissociates Rex from KPNB1 and allows Rex's binding to the RRE in viral pre-mRNAs. Rex multimerizes on the RRE via cooperative assembly. This multimerization is critical for its full biological activity, since it may shield the viral RNA from being spliced or down-regulated, and probably exposes Rex's nuclear export signal (NES) to the surface. Rex can then form a complex with XPO1/CRM1, RANBP3 and Ran-GTP, leading to nuclear export of the complex. Conversion from Ran-GTP to Ran-GDP mediates dissociation of the Rex/RRE/XPO1/RANBP3/RAN complex, so that Rex can return to the nucleus for a subsequent round of export. The chain is Protein Rex from Homo sapiens (Human).